We begin with the raw amino-acid sequence, 299 residues long: Protease HtpX homolog (299 aa).

2 helical membrane passes run 15–35 (ILLLVFFLLLALVGYAVGYLF) and 39–59 (GLGGLVIALIIGFIYALSMIF). His143 contacts Zn(2+). Glu144 is an active-site residue. His147 provides a ligand contact to Zn(2+). The next 2 helical transmembrane spans lie at 158–178 (IAVALASAITMLSSMAGRMMW) and 198–218 (IIMLVVSLLAIVLAPLAATLV). Glu227 provides a ligand contact to Zn(2+).

This sequence belongs to the peptidase M48B family. The cofactor is Zn(2+).

The protein localises to the cell membrane. The polypeptide is Protease HtpX homolog (Streptococcus pneumoniae serotype 4 (strain ATCC BAA-334 / TIGR4)).